A 798-amino-acid chain; its full sequence is Integrin beta-5 (798 aa).

A signal peptide spans 1–23 (MPRVPATLYACLLGLCALVPRLA). The Extracellular portion of the chain corresponds to 24 to 719 (GLNICTSGSA…REPECGSAPN (696 aa)). In terms of domain architecture, PSI spans 27–76 (ICTSGSATSCEECLLIHPKCAWCSKEYFGNPRSITSRCDLKANLIRNGCE). 19 disulfides stabilise this stretch: cysteine 28–cysteine 46, cysteine 36–cysteine 463, cysteine 39–cysteine 64, cysteine 49–cysteine 75, cysteine 202–cysteine 211, cysteine 259–cysteine 300, cysteine 401–cysteine 413, cysteine 433–cysteine 461, cysteine 465–cysteine 484, cysteine 476–cysteine 487, cysteine 489–cysteine 498, cysteine 500–cysteine 530, cysteine 513–cysteine 528, cysteine 522–cysteine 533, cysteine 535–cysteine 548, cysteine 550–cysteine 571, cysteine 555–cysteine 569, cysteine 563–cysteine 574, and cysteine 576–cysteine 585. In terms of domain architecture, VWFA spans 136–378 (YPVDLYYLMD…QLIINAYSSI (243 aa)). Mg(2+)-binding residues include serine 147 and serine 149. Ca(2+) contacts are provided by serine 149, aspartate 152, aspartate 153, and aspartate 184. Residues asparagine 242, aspartate 244, proline 246, and glutamate 247 each coordinate Ca(2+). Glutamate 247 provides a ligand contact to Mg(2+). Asparagine 347 carries N-linked (GlcNAc...) asparagine glycosylation. Glycine 362 is a Ca(2+) binding site. N-linked (GlcNAc...) asparagine glycosylation is found at asparagine 460 and asparagine 479. I-EGF domains follow at residues 465-499 (CSTGLEPNSARCSGNGTYTCGLCECDPGYLGTRCE), 500-549 (CQEG…PFCE), 550-586 (CDSFSCARNKGVLCSGHGECHCGECKCHAGYIGDNCN), and 587-626 (CSTDVSTCKAKDGQICSDRGRCVCGQCQCTEPGAFGETCE). An N-linked (GlcNAc...) asparagine glycan is attached at asparagine 505. Asparagine 586 carries an N-linked (GlcNAc...) asparagine glycan. 9 cysteine pairs are disulfide-bonded: cysteine 587/cysteine 610, cysteine 594/cysteine 608, cysteine 602/cysteine 613, cysteine 615/cysteine 625, cysteine 628/cysteine 631, cysteine 635/cysteine 682, cysteine 641/cysteine 661, cysteine 644/cysteine 657, and cysteine 690/cysteine 714. 2 N-linked (GlcNAc...) asparagine glycosylation sites follow: asparagine 654 and asparagine 705. A helical membrane pass occupies residues 720–742 (AMTILLAVVGSILLIGMALLAIW). The Cytoplasmic portion of the chain corresponds to 743 to 798 (KLLVTIHDRREFAKFQSERSRARYEMASNPLYRKPISTHTVDFAFNKFNKSYNGSV). Phosphoserine is present on serine 770.

It belongs to the integrin beta chain family. As to quaternary structure, heterodimer of an alpha and a beta subunit. Beta-5 (ITGB5) associates with alpha-V (ITGAV). Interacts with MYO10. Interacts with DAB2. Integrin ITGAV:ITGB5 interacts with FBLN5 (via N-terminus). ITGAV:ITGB5 interacts with CCN3. Interacts with tensin TNS3; TNS3 also interacts with PEAK1, thus acting as an adapter molecule to bridge the association of PEAK1 with ITGB5.

The protein resides in the cell membrane. Functionally, integrin alpha-V/beta-5 (ITGAV:ITGB5) is a receptor for fibronectin. It recognizes the sequence R-G-D in its ligand. The chain is Integrin beta-5 (Itgb5) from Mus musculus (Mouse).